A 365-amino-acid chain; its full sequence is MPEITVRAKSKTYPVYINEFALEDVREKWTESLAKFSHVFVLTDEHVAELHKAKLDAVLADLPVVTYYVAPNGEEAKTFRVYEDVMTKLIETGLDRKAVLIAFGGGVIGDLGGFVAATYMRGIPFYQVPTTVLAHDSAVGGKVAINHPLGKNMIGNFYQPEAVIYDTQFFATLPEREMRSGFAEMIKHALISDQTLLRALMDTFTEPKDFYTKDLTPFLQRGIEIKANIVAQDETEQGVRAYLNFGHTFGHALEAYGNFGKWLHGEAITYGMIYALTMSEAIYGLDFDLAEFKTWLKQLGYDTTFDATVPFSKILENMRHDKKTTFNEISMVLLEEIGKPVIFKAEDDLIFETYKRVMRNGGNGI.

NAD(+) is bound by residues 106–110, 130–131, Lys-142, Lys-151, and 169–172; these read GVIGD, TT, and FFAT. Positions 184, 247, and 264 each coordinate Zn(2+).

Belongs to the sugar phosphate cyclases superfamily. Dehydroquinate synthase family. Co(2+) serves as cofactor. Requires Zn(2+) as cofactor. NAD(+) is required as a cofactor.

It is found in the cytoplasm. It catalyses the reaction 7-phospho-2-dehydro-3-deoxy-D-arabino-heptonate = 3-dehydroquinate + phosphate. It participates in metabolic intermediate biosynthesis; chorismate biosynthesis; chorismate from D-erythrose 4-phosphate and phosphoenolpyruvate: step 2/7. In terms of biological role, catalyzes the conversion of 3-deoxy-D-arabino-heptulosonate 7-phosphate (DAHP) to dehydroquinate (DHQ). The sequence is that of 3-dehydroquinate synthase from Listeria monocytogenes serotype 4a (strain HCC23).